The chain runs to 222 residues: Cytidylate kinase (222 aa).

7-15 (GPSASGKST) provides a ligand contact to ATP.

Belongs to the cytidylate kinase family. Type 1 subfamily.

The protein localises to the cytoplasm. It carries out the reaction CMP + ATP = CDP + ADP. The catalysed reaction is dCMP + ATP = dCDP + ADP. This chain is Cytidylate kinase, found in Aquifex aeolicus (strain VF5).